The chain runs to 590 residues: Mitochondrial distribution and morphology protein 34 (590 aa).

Residues 1–225 form the SMP-LTD domain; the sequence is MSFIFNRETF…LPSVIFNMSQ (225 aa). Residues 393 to 405 show a composition bias toward basic residues; it reads RRKIKMRSRKPSK. The segment at 393-456 is disordered; that stretch reads RRKIKMRSRK…APEGGPNAED (64 aa). Residues 413 to 427 are compositionally biased toward polar residues; it reads PAQNDSGTSSCSNVA.

This sequence belongs to the MDM34 family. As to quaternary structure, component of the ER-mitochondria encounter structure (ERMES) or MDM complex, composed of MMM1, MDM10, MDM12 and MDM34.

Its subcellular location is the mitochondrion outer membrane. In terms of biological role, component of the ERMES/MDM complex, which serves as a molecular tether to connect the endoplasmic reticulum (ER) and mitochondria. Components of this complex are involved in the control of mitochondrial shape and protein biogenesis, and function in nonvesicular lipid trafficking between the ER and mitochondria. MDM34 is required for the interaction of the ER-resident membrane protein MMM1 and the outer mitochondrial membrane-resident beta-barrel protein MDM10. The sequence is that of Mitochondrial distribution and morphology protein 34 from Eremothecium gossypii (strain ATCC 10895 / CBS 109.51 / FGSC 9923 / NRRL Y-1056) (Yeast).